A 91-amino-acid chain; its full sequence is Mercuric transport protein periplasmic component (91 aa).

The signal sequence occupies residues 1-19 (MKKLFASLALAAAVAPVWA). One can recognise an HMA domain in the interval 22-88 (QTVTLAVPGM…ATADAGYPSS (67 aa)). 2 residues coordinate Hg(2+): cysteine 33 and cysteine 36.

It belongs to the MerP family. Monomer.

The protein resides in the periplasm. Its function is as follows. Involved in mercury resistance. Acts as a mercury scavenger that specifically binds to a mercuric ion in the periplasm and probably passes it to the cytoplasmic mercuric reductase MerA via the mercuric transport protein MerT. This chain is Mercuric transport protein periplasmic component, found in Shigella flexneri.